Consider the following 250-residue polypeptide: Small ribosomal subunit protein uS2 (250 aa).

Residues 226–250 (DQQNRQELGEDLGAAVEPAAEEALA) are disordered. Positions 239–250 (AAVEPAAEEALA) are enriched in low complexity.

The protein belongs to the universal ribosomal protein uS2 family.

In Zymomonas mobilis subsp. mobilis (strain ATCC 31821 / ZM4 / CP4), this protein is Small ribosomal subunit protein uS2 (rpsB).